Reading from the N-terminus, the 483-residue chain is Spermatogenesis-defective protein 39 homolog (483 aa).

This sequence belongs to the SPE39 family. In terms of assembly, interacts with vps33b. As to expression, high levels detected in liver and small intestine of larvae at 5 days post-fertilization.

The protein resides in the cytoplasm. Its subcellular location is the cytoplasmic vesicle. The protein localises to the early endosome. It is found in the recycling endosome. It localises to the late endosome. In terms of biological role, proposed to be involved in endosomal maturation implicating in part vps33b. In epithelial cells, the vps33b:vipas39 complex may play a role in the apical rab11a-dependent recycling pathway and in the maintenance of the apical-basolateral polarity. May play a role in lysosomal trafficking, probably via association with the core HOPS complex in a discrete population of endosomes; the functions seems to be independent of vps33b. May play a role in vesicular trafficking during spermatogenesis. May be involved in direct or indirect transcriptional regulation of E-cadherin. This chain is Spermatogenesis-defective protein 39 homolog (vipas39), found in Danio rerio (Zebrafish).